We begin with the raw amino-acid sequence, 432 residues long: Ciliated left-right organizer protein containing ZP-N domains homolog (432 aa).

Expressed specifically by cells of the ciliated left-right organizer.

The sequence is that of Ciliated left-right organizer protein containing ZP-N domains homolog (ciroz) from Danio rerio (Zebrafish).